Consider the following 345-residue polypeptide: Protein SHI RELATED SEQUENCE 7 (345 aa).

The segment at 7–28 (LGGRDHNKQDHHQEKDHNEDKS) is disordered. Over residues 9–28 (GRDHNKQDHHQEKDHNEDKS) the composition is skewed to basic and acidic residues. 6 residues coordinate Zn(2+): cysteine 119, cysteine 122, cysteine 130, cysteine 135, cysteine 139, and cysteine 146. A DNA-binding region (zn(2)-C6 fungal-type; degenerate) is located at residues 119-146 (CQDCGNQAKKDCPHMRCRTCCKSRGFDC). The tract at residues 168 to 200 (AVLPAKRIRDANSRGGGDDDDDDKEDEKNDSCG) is disordered. Residues 256–259 (IGGH) carry the Required for homo- and heterodimerization motif.

This sequence belongs to the SHI protein family. Mainly expressed in the filaments of flowers, the shoot apex regions and pollen. Also present in leaves.

The protein localises to the nucleus. In terms of biological role, transcription activator that binds DNA on 5'-ACTCTAC-3' and promotes auxin homeostasis-regulating gene expression (e.g. YUC genes), as well as genes affecting stamen development, cell expansion and timing of flowering. Synergistically with other SHI-related proteins, regulates gynoecium, stamen and leaf development in a dose-dependent manner, controlling apical-basal patterning. Promotes style and stigma formation, and influences vascular development during gynoecium development. May also have a role in the formation and/or maintenance of the shoot apical meristem (SAM). Regulates anther dehiscence and floral development. This chain is Protein SHI RELATED SEQUENCE 7 (SRS7), found in Arabidopsis thaliana (Mouse-ear cress).